A 257-amino-acid chain; its full sequence is uncharacterized protein (257 aa).

The signal sequence occupies residues 1-22; it reads MIHSKRLRLWLYLVLLAVFIGA. The N-palmitoyl cysteine moiety is linked to residue cysteine 23. A lipid anchor (S-diacylglycerol cysteine) is attached at cysteine 23.

The protein belongs to the staphylococcal tandem lipoprotein family.

The protein localises to the cell membrane. This is an uncharacterized protein from Staphylococcus aureus (strain NCTC 8325 / PS 47).